A 286-amino-acid polypeptide reads, in one-letter code: Acyl-CoA thioesterase 2 (286 aa).

Residues aspartate 204, threonine 228, and glutamine 278 each act as charge relay system in the active site.

The protein belongs to the C/M/P thioester hydrolase family. Homotetramer.

The catalysed reaction is a fatty acyl-CoA + H2O = a fatty acid + CoA + H(+). Thioesterase that has relatively broad substrate specificity, hydrolyzing primarily medium- and long-chain acyl-CoA substrates to free fatty acids and CoA. This chain is Acyl-CoA thioesterase 2 (tesB), found in Haemophilus influenzae (strain ATCC 51907 / DSM 11121 / KW20 / Rd).